We begin with the raw amino-acid sequence, 164 residues long: Nucleotide-binding protein Acid345_2028 (164 aa).

It belongs to the YajQ family.

Functionally, nucleotide-binding protein. The chain is Nucleotide-binding protein Acid345_2028 from Koribacter versatilis (strain Ellin345).